Consider the following 89-residue polypeptide: U-scoloptoxin(12)-Er1a (89 aa).

The first 22 residues, Met-1–Thr-22, serve as a signal peptide directing secretion.

This sequence belongs to the scoloptoxin-12 family. Contains 3 disulfide bonds. As to expression, expressed by the venom gland.

Its subcellular location is the secreted. In Ethmostigmus rubripes (Giant centipede), this protein is U-scoloptoxin(12)-Er1a.